Here is a 422-residue protein sequence, read N- to C-terminus: Glycine amidinotransferase, mitochondrial (422 aa).

Residues methionine 1 to glutamine 37 constitute a mitochondrion transit peptide. Residues aspartate 253 and histidine 302 contribute to the active site. Cysteine 406 (amidino-cysteine intermediate) is an active-site residue.

The protein belongs to the amidinotransferase family. Homodimer. In terms of tissue distribution, ubiquitously expressed in adult tissues, with highest levels in muscle and intermediate levels in eye, heart, liver, stomach and testis. In stage 28 embryos, expression is higher in the dorsal and ventral parts of the trunk than in the head. In middle gastrulae, expression is highest around the yolk plug, while in stage 15 and tailbud stage embryos, expression is largely restricted to the region around the presumptive notochord and gut.

It localises to the mitochondrion inner membrane. The enzyme catalyses L-arginine + glycine = guanidinoacetate + L-ornithine. It participates in amine and polyamine biosynthesis; creatine biosynthesis; creatine from L-arginine and glycine: step 1/2. Functionally, catalyzes the biosynthesis of guanidinoacetate, the immediate precursor of creatine. Creatine plays a vital role in energy metabolism in muscle tissues. May play a role in embryonic and central nervous system development. The protein is Glycine amidinotransferase, mitochondrial of Xenopus laevis (African clawed frog).